Reading from the N-terminus, the 117-residue chain is Large ribosomal subunit protein bL20 (117 aa).

The protein belongs to the bacterial ribosomal protein bL20 family.

In terms of biological role, binds directly to 23S ribosomal RNA and is necessary for the in vitro assembly process of the 50S ribosomal subunit. It is not involved in the protein synthesizing functions of that subunit. This Rickettsia typhi (strain ATCC VR-144 / Wilmington) protein is Large ribosomal subunit protein bL20.